Reading from the N-terminus, the 193-residue chain is Peptidyl-tRNA hydrolase (193 aa).

Tyr-18 contributes to the tRNA binding site. His-23 (proton acceptor) is an active-site residue. TRNA-binding residues include Phe-69, Asn-71, and Asn-117.

This sequence belongs to the PTH family. Monomer.

Its subcellular location is the cytoplasm. It carries out the reaction an N-acyl-L-alpha-aminoacyl-tRNA + H2O = an N-acyl-L-amino acid + a tRNA + H(+). In terms of biological role, hydrolyzes ribosome-free peptidyl-tRNAs (with 1 or more amino acids incorporated), which drop off the ribosome during protein synthesis, or as a result of ribosome stalling. Its function is as follows. Catalyzes the release of premature peptidyl moieties from peptidyl-tRNA molecules trapped in stalled 50S ribosomal subunits, and thus maintains levels of free tRNAs and 50S ribosomes. This chain is Peptidyl-tRNA hydrolase, found in Teredinibacter turnerae (strain ATCC 39867 / T7901).